Consider the following 282-residue polypeptide: MIICKKISAVRDIVKEQRGQGRSIALVPTMGYLHEGHLTLVEEARKSGAFVVMSIFVNPLQFGPNEDFARYPRDLERDAKKAEGAGVDLIFNPEVEEMYPAKNLTHVEVDELGDSLCGASRPGHFRGVTTVVSKLFHIVQPDRAYFGQKDYQQYLIICQMVKDLNFPIEVIGVPIVREEDGLALSSRNIYLSPEQRAEALVLQRSLGEAENWFRQGERSALSIEERIKELIRNESSGEIDYVEIRSAENLHRVEQIEGKIFIALAVRFGSTRLIDNKVLEGM.

30-37 contacts ATP; the sequence is MGYLHEGH. The active-site Proton donor is histidine 37. Glutamine 61 is a binding site for (R)-pantoate. Residue glutamine 61 participates in beta-alanine binding. 147-150 contacts ATP; that stretch reads GQKD. Glutamine 153 serves as a coordination point for (R)-pantoate. ATP is bound by residues valine 176 and 184–187; that span reads LSSR.

The protein belongs to the pantothenate synthetase family. In terms of assembly, homodimer.

Its subcellular location is the cytoplasm. The enzyme catalyses (R)-pantoate + beta-alanine + ATP = (R)-pantothenate + AMP + diphosphate + H(+). It functions in the pathway cofactor biosynthesis; (R)-pantothenate biosynthesis; (R)-pantothenate from (R)-pantoate and beta-alanine: step 1/1. Functionally, catalyzes the condensation of pantoate with beta-alanine in an ATP-dependent reaction via a pantoyl-adenylate intermediate. This Desulfitobacterium hafniense (strain DSM 10664 / DCB-2) protein is Pantothenate synthetase.